A 384-amino-acid chain; its full sequence is Chorismate synthase (384 aa).

Residues arginine 39 and arginine 45 each contribute to the NADP(+) site. Residues 130–132, 248–249, glycine 292, 307–311, and arginine 333 contribute to the FMN site; these read RSS, NA, and KPIPT.

Belongs to the chorismate synthase family. In terms of assembly, homotetramer. The cofactor is FMNH2.

It catalyses the reaction 5-O-(1-carboxyvinyl)-3-phosphoshikimate = chorismate + phosphate. The protein operates within metabolic intermediate biosynthesis; chorismate biosynthesis; chorismate from D-erythrose 4-phosphate and phosphoenolpyruvate: step 7/7. Functionally, catalyzes the anti-1,4-elimination of the C-3 phosphate and the C-6 proR hydrogen from 5-enolpyruvylshikimate-3-phosphate (EPSP) to yield chorismate, which is the branch point compound that serves as the starting substrate for the three terminal pathways of aromatic amino acid biosynthesis. This reaction introduces a second double bond into the aromatic ring system. In Exiguobacterium sibiricum (strain DSM 17290 / CCUG 55495 / CIP 109462 / JCM 13490 / 255-15), this protein is Chorismate synthase.